We begin with the raw amino-acid sequence, 660 residues long: tRNA 5-methylaminomethyl-2-thiouridine biosynthesis bifunctional protein MnmC (660 aa).

The segment at 1 to 242 is tRNA (mnm(5)s(2)U34)-methyltransferase; that stretch reads MTDRIVPATL…KRAMLVGEFA (242 aa). Positions 266 to 660 are FAD-dependent cmnm(5)s(2)U34 oxidoreductase; sequence IGAGLAGCAV…VRALRHGRVA (395 aa).

This sequence in the N-terminal section; belongs to the methyltransferase superfamily. tRNA (mnm(5)s(2)U34)-methyltransferase family. It in the C-terminal section; belongs to the DAO family. It depends on FAD as a cofactor.

It localises to the cytoplasm. It catalyses the reaction 5-aminomethyl-2-thiouridine(34) in tRNA + S-adenosyl-L-methionine = 5-methylaminomethyl-2-thiouridine(34) in tRNA + S-adenosyl-L-homocysteine + H(+). Functionally, catalyzes the last two steps in the biosynthesis of 5-methylaminomethyl-2-thiouridine (mnm(5)s(2)U) at the wobble position (U34) in tRNA. Catalyzes the FAD-dependent demodification of cmnm(5)s(2)U34 to nm(5)s(2)U34, followed by the transfer of a methyl group from S-adenosyl-L-methionine to nm(5)s(2)U34, to form mnm(5)s(2)U34. The polypeptide is tRNA 5-methylaminomethyl-2-thiouridine biosynthesis bifunctional protein MnmC (Burkholderia mallei (strain NCTC 10247)).